The sequence spans 71 residues: MPIIKVRDNEPFDVALRRFKRSCEKAGILADVRAREFYEKPTTARKRAKAAAVKRLAKKLSRENARRVRLY.

It belongs to the bacterial ribosomal protein bS21 family.

The protein is Small ribosomal subunit protein bS21 of Shewanella woodyi (strain ATCC 51908 / MS32).